We begin with the raw amino-acid sequence, 545 residues long: Cryptochrome-1 (545 aa).

Residues 3–138 (VNNILWFRHG…KCVEKVSHTL (136 aa)) form the Photolyase/cryptochrome alpha/beta domain. FAD is bound by residues arginine 236, serine 264, serine 266, glutamine 307, histidine 374, 406-408 (DAD), cysteine 412, and asparagine 415.

Belongs to the DNA photolyase class-1 family. Interacts with tim and per; promoted by light conditions. It depends on FAD as a cofactor.

It localises to the cytoplasm. It is found in the perinuclear region. The protein resides in the nucleus. Blue light-dependent regulator that is the input of the circadian feedback loop. Has no photolyase activity for cyclobutane pyrimidine dimers or 6-4 photoproducts. Regulation of expression by light suggests a role in photoreception for locomotor activity rhythms. Functions, together with per, as a transcriptional repressor required for the oscillation of peripheral circadian clocks and for the correct specification of clock cells. Genes directly activated by the transcription factors Clock (Clk) and cycle (cyc) are repressed by cry. This Aedes aegypti (Yellowfever mosquito) protein is Cryptochrome-1.